The following is a 1141-amino-acid chain: Putative late blight resistance protein homolog R1B-13 (1141 aa).

Positions 417–437 (DSLAFLKNQIQVIQMEFEILQ) form a coiled coil. Residues 516–742 (TVITHTSSQL…LSIVLVADVL (227 aa)) enclose the NB-ARC domain. LRR repeat units lie at residues 826 to 851 (FKFLKVLDLEHQVVIDFIPTELPYLR), 869 to 894 (LWNLETLILKGTSAKTLLLPSTVWDM), 992 to 1016 (APNLKYLKLSGYYLDSQYLSETVDH), 1017 to 1041 (LKHLEVLKLYNVEFGDYREWEVSNG), and 1043 to 1068 (FPQLKILKLENLSLMKWIVADDAFPI).

Belongs to the disease resistance NB-LRR family.

The protein resides in the cytoplasm. It is found in the membrane. Functionally, confers resistance to late blight (Phytophthora infestans) races carrying the avirulence gene Avr1. Resistance proteins guard the plant against pathogens that contain an appropriate avirulence protein via an indirect interaction with this avirulence protein. That triggers a defense system including the hypersensitive response, which restricts the pathogen growth. This is Putative late blight resistance protein homolog R1B-13 (R1B-13) from Solanum demissum (Wild potato).